Reading from the N-terminus, the 64-residue chain is Large ribosomal subunit protein bL35 (64 aa).

The protein belongs to the bacterial ribosomal protein bL35 family.

The protein is Large ribosomal subunit protein bL35 of Shewanella baltica (strain OS223).